The sequence spans 248 residues: Probable 2-oxo-3-(5-oxofuran-2-ylidene)propanoate lactonase (248 aa).

Residues Cys-123, Asp-180, and His-212 contribute to the active site.

The protein belongs to the dienelactone hydrolase family.

The enzyme catalyses 2-oxo-3-(5-oxofuran-2-ylidene)propanoate + H2O = 3-maleylpyruvate + H(+). In terms of biological role, involved in the 5-nitroanthranilic acid (5NAA) degradation. Catalyzes the hydrolysis of the lactone to produce maleylpyruvate biodegradation of 5-nitroanthranilate. This chain is Probable 2-oxo-3-(5-oxofuran-2-ylidene)propanoate lactonase (naaC), found in Bradyrhizobium sp.